Reading from the N-terminus, the 207-residue chain is Cytochrome c biogenesis ATP-binding export protein CcmA (207 aa).

One can recognise an ABC transporter domain in the interval 2-204; it reads LEVKNLTAIR…NPKLRKIRLG (203 aa). An ATP-binding site is contributed by 34-41; it reads GRNGTGKT.

Belongs to the ABC transporter superfamily. CcmA exporter (TC 3.A.1.107) family. As to quaternary structure, the complex is composed of two ATP-binding proteins (CcmA) and two transmembrane proteins (CcmB).

It is found in the cell inner membrane. The enzyme catalyses heme b(in) + ATP + H2O = heme b(out) + ADP + phosphate + H(+). Functionally, part of the ABC transporter complex CcmAB involved in the biogenesis of c-type cytochromes; once thought to export heme, this seems not to be the case, but its exact role is uncertain. Responsible for energy coupling to the transport system. This chain is Cytochrome c biogenesis ATP-binding export protein CcmA, found in Vibrio cholerae serotype O1 (strain ATCC 39315 / El Tor Inaba N16961).